The following is a 402-amino-acid chain: 2,3-bisphosphoglycerate-independent phosphoglycerate mutase 2 (402 aa).

This sequence belongs to the BPG-independent phosphoglycerate mutase family. A-PGAM subfamily.

The enzyme catalyses (2R)-2-phosphoglycerate = (2R)-3-phosphoglycerate. Its pathway is carbohydrate degradation; glycolysis; pyruvate from D-glyceraldehyde 3-phosphate: step 3/5. Functionally, catalyzes the interconversion of 2-phosphoglycerate and 3-phosphoglycerate. This is 2,3-bisphosphoglycerate-independent phosphoglycerate mutase 2 (apgM2) from Methanothermobacter thermautotrophicus (strain ATCC 29096 / DSM 1053 / JCM 10044 / NBRC 100330 / Delta H) (Methanobacterium thermoautotrophicum).